Consider the following 248-residue polypeptide: Mannose-binding protein C (248 aa).

Positions 1-20 (MSLIPSLSLLLMSMVAASYS) are cleaved as a signal peptide. The 58-residue stretch at 42–99 (GINGFPGKDGRDGTKGEKGEPGQGLRGLQGPPGKLGPPGNPGPSGSPGPKGQKGDPGN) folds into the Collagen-like domain. The interval 43 to 110 (INGFPGKDGR…PDCDSSLAVS (68 aa)) is disordered. Pro-47 carries the 4-hydroxyproline modification. The span at 49–61 (KDGRDGTKGEKGE) shows a compositional bias: basic and acidic residues. 4-hydroxyproline is present on residues Pro-73, Pro-79, Pro-82, and Pro-88. Over residues 75–87 (KLGPPGNPGPSGS) the composition is skewed to pro residues. A coiled-coil region spans residues 112 to 130 (RKALQTEMARIKKWLTFSL). The C-type lectin domain maps to 134-245 (VGNKFFLTNG…CSSSHLAVCE (112 aa)). Intrachain disulfides connect Cys-155-Cys-244 and Cys-222-Cys-236.

As to quaternary structure, oligomeric complex of 3 or more homotrimers. Interacts with MASP1 and MASP2. Interacts with MEP1A and MEP1B and may inhibit their catalytic activity. Hydroxylation on proline residues within the sequence motif, GXPG, is most likely to be 4-hydroxy as this fits the requirement for 4-hydroxylation in vertebrates.

It is found in the secreted. Calcium-dependent lectin involved in innate immune defense. Binds mannose, fucose and N-acetylglucosamine on different microorganisms and activates the lectin complement pathway. Binds to late apoptotic cells, as well as to apoptotic blebs and to necrotic cells, but not to early apoptotic cells, facilitating their uptake by macrophages. The protein is Mannose-binding protein C (MBL2) of Nomascus concolor (Black crested gibbon).